A 214-amino-acid chain; its full sequence is Outer-membrane lipoprotein carrier protein (214 aa).

The signal sequence occupies residues Met1–Ala24.

This sequence belongs to the LolA family. As to quaternary structure, monomer.

It localises to the periplasm. Its function is as follows. Participates in the translocation of lipoproteins from the inner membrane to the outer membrane. Only forms a complex with a lipoprotein if the residue after the N-terminal Cys is not an aspartate (The Asp acts as a targeting signal to indicate that the lipoprotein should stay in the inner membrane). This is Outer-membrane lipoprotein carrier protein from Alkalilimnicola ehrlichii (strain ATCC BAA-1101 / DSM 17681 / MLHE-1).